Reading from the N-terminus, the 681-residue chain is PTS system glucose-specific EIICBA component (681 aa).

Residues 3–414 (KKLFGQLQRI…LKYKTPGRED (412 aa)) enclose the PTS EIIC type-1 domain. The next 10 helical transmembrane spans lie at 16–36 (LMLP…GTAM), 73–93 (MIFA…AAIA), 126–146 (ILGI…GALA), 170–190 (FVPI…ALIW), 199–219 (AFST…FGFI), 273–293 (FMQG…LAIY), 303–323 (VVAG…ITEP), 328–348 (FLFV…LSFL), 355–375 (LHLG…GILP), and 383–403 (VIPV…FLIV). A PTS EIIB type-1 domain is found at 425–506 (TELPYAVLEA…QQIMNGQVVE (82 aa)). The Phosphocysteine intermediate; for EIIB activity role is filled by Cys-447. The PTS EIIA type-1 domain maps to 551 to 655 (DQVFSEKMMG…SDITPIIVTQ (105 aa)). His-603 (tele-phosphohistidine intermediate; for EIIA activity) is an active-site residue.

The protein resides in the cell membrane. The catalysed reaction is N(pros)-phospho-L-histidyl-[protein] + D-glucose(out) = D-glucose 6-phosphate(in) + L-histidyl-[protein]. In terms of biological role, the phosphoenolpyruvate-dependent sugar phosphotransferase system (sugar PTS), a major carbohydrate active transport system, catalyzes the phosphorylation of incoming sugar substrates concomitantly with their translocation across the cell membrane. This system is involved in glucose transport. This Staphylococcus aureus (strain bovine RF122 / ET3-1) protein is PTS system glucose-specific EIICBA component (ptsG).